The primary structure comprises 572 residues: MQVELIIKNLKVYNSYFKKFIKSDVLINEGKFLHIGKGYEDRLWSENIIDGEDKYIIPGLIDIHMHIESSMTIPREFSKAAIKHGVTTVVADPHEIANVFGVRGIEEFIKFKGNLDIFYGIPSSVPSTSSSLETTGEKITHNEVKRLLEYDNIICLGEVMNFKDLIEDDDSNINKIINISKEKNIPLEGHCPKIQGVDLSLYIYRGVNGDHTQQSVGSLQEKIQNGMFIEMQHKSMTLENIKFLIENNLYEHFALVTDDVMADKLVKGHLDEILKEAVKLGMSIENAIYASTYTPARRMNLLDRGTIAPGKLADFILLDSIEDFNIYEVYKNGEMVFNRDKGLKEEFFEDKSKLDYRFYNSIELNNITKESLEVKVPNKYKNKVNCRTMKVLKNTTFTEEGEVTLNVYNNILQWEKSSCALIAVFERYGKNNNISFGLVEGEIIKEGAIATTWAHDHHNLMVMGRNISDMTIAANEVINSRGGYVVSKNNEVIAKLELPIGGIISDEPIEIIGEKLGEVRNAMRDLGYNHMNEIMSFSTLSLPVSPALKITDKGLIDVKKGSIVSLFKKGLY.

Belongs to the metallo-dependent hydrolases superfamily. Adenine deaminase family. Mn(2+) serves as cofactor.

The catalysed reaction is adenine + H2O + H(+) = hypoxanthine + NH4(+). This chain is Adenine deaminase, found in Clostridium perfringens (strain 13 / Type A).